Here is a 258-residue protein sequence, read N- to C-terminus: UPF0246 protein YaaA (258 aa).

This sequence belongs to the UPF0246 family.

The polypeptide is UPF0246 protein YaaA (Escherichia coli O6:K15:H31 (strain 536 / UPEC)).